A 1402-amino-acid chain; its full sequence is Transcription elongation factor spt-6 (1402 aa).

The disordered stretch occupies residues 1-199 (MSNSMRDLID…PKDRGLNIDT (199 aa)). Composition is skewed to acidic residues over residues 10-28 (DGEA…DEEA), 40-52 (DSSE…EDEE), 62-75 (IVDE…EDSD), and 90-102 (EEEE…DLDL). Residues 123–135 (HRDDHRPTERRGL) show a composition bias toward basic and acidic residues. The span at 161-176 (DEFDDFIEDDYPEDDE) shows a compositional bias: acidic residues. A compositionally biased stretch (basic and acidic residues) spans 177–199 (ERRHREEDEEVARPKDRGLNIDT). The region spanning 1094–1161 (GMIVAANVRV…KEFVSKLSMR (68 aa)) is the S1 motif domain. The SH2 domain occupies 1209–1306 (PLFKPFNSTQ…KKVDELMQCD (98 aa)).

The protein belongs to the SPT6 family.

The protein resides in the nucleus. It is found in the chromosome. In terms of biological role, histone H3-H4 chaperone that plays a role in maintenance of chromatin structure during RNA polymerase II transcription elongation thereby repressing transcription initiation from cryptic promoters. Mediates the reassembly of nucleosomes onto the promoters of at least a selected set of genes during repression; the nucleosome reassembly is essential for transcriptional repression. Essential for viability. The protein is Transcription elongation factor spt-6 (spt-6) of Neurospora crassa (strain ATCC 24698 / 74-OR23-1A / CBS 708.71 / DSM 1257 / FGSC 987).